A 77-amino-acid polypeptide reads, in one-letter code: Conotoxin Mr8.2 (77 aa).

A signal peptide spans 1–16 (MLRLITAAVLVSACLA). Residues 17-32 (YPQKKRTPPQTRPTSR) constitute a propeptide that is removed on maturation.

This sequence belongs to the conotoxin B2 family. Contains 5 disulfide bonds. In terms of tissue distribution, expressed by the venom duct.

The protein resides in the secreted. This Conus marmoreus (Marble cone) protein is Conotoxin Mr8.2.